Here is a 229-residue protein sequence, read N- to C-terminus: Platelet-activating factor acetylhydrolase IB subunit alpha2 (229 aa).

Residues Ser-48, Asp-193, and His-196 contribute to the active site.

It belongs to the 'GDSL' lipolytic enzyme family. Platelet-activating factor acetylhydrolase IB beta/gamma subunits subfamily. As to quaternary structure, forms a catalytic dimer which is either homodimer (alpha2/alpha2 homodimer) or heterodimer with PAFAH1B3 (alpha2/alpha1 heterodimer). Component of the cytosolic (PAF-AH (I)) heterotetrameric enzyme, which is composed of PAFAH1B1 (beta), PAFAH1B2 (alpha2) and PAFAH1B3 (alpha1) subunits. The catalytic activity of the enzyme resides in the alpha1 (PAFAH1B3) and alpha2 (PAFAH1B2) subunits, whereas the beta subunit (PAFAH1B1) has regulatory activity. Trimer formation is not essential for the catalytic activity.

It localises to the cytoplasm. The catalysed reaction is a 1-O-alkyl-2-acetyl-sn-glycero-3-phosphocholine + H2O = a 1-O-alkyl-sn-glycero-3-phosphocholine + acetate + H(+). It catalyses the reaction 1-O-hexadecyl-2-acetyl-sn-glycero-3-phosphocholine + H2O = 1-O-hexadecyl-sn-glycero-3-phosphocholine + acetate + H(+). The enzyme catalyses 1-O-hexadecyl-2-acetyl-sn-glycero-3-phosphate + H2O = 1-O-hexadecyl-sn-glycero-3-phosphate + acetate + H(+). It carries out the reaction 1-O-hexadecyl-2-acetyl-sn-glycero-3-phosphoethanolamine + H2O = 1-O-hexadecyl-sn-glycero-3-phosphoethanolamine + acetate + H(+). In terms of biological role, alpha2 catalytic subunit of the cytosolic type I platelet-activating factor (PAF) acetylhydrolase (PAF-AH (I)) heterotetrameric enzyme that catalyzes the hydrolyze of the acetyl group at the sn-2 position of PAF and its analogs and modulates the action of PAF. The protein is Platelet-activating factor acetylhydrolase IB subunit alpha2 (PAFAH1B2) of Gallus gallus (Chicken).